Here is a 358-residue protein sequence, read N- to C-terminus: Alanine racemase (358 aa).

The Proton acceptor; specific for D-alanine role is filled by Lys34. The residue at position 34 (Lys34) is an N6-(pyridoxal phosphate)lysine. Residue Arg129 participates in substrate binding. Catalysis depends on Tyr254, which acts as the Proton acceptor; specific for L-alanine. Residue Met302 coordinates substrate.

Belongs to the alanine racemase family. Pyridoxal 5'-phosphate serves as cofactor.

The enzyme catalyses L-alanine = D-alanine. It functions in the pathway amino-acid biosynthesis; D-alanine biosynthesis; D-alanine from L-alanine: step 1/1. In terms of biological role, catalyzes the interconversion of L-alanine and D-alanine. May also act on other amino acids. This Vibrio vulnificus (strain CMCP6) protein is Alanine racemase (alr).